We begin with the raw amino-acid sequence, 481 residues long: NADH-quinone oxidoreductase subunit N (481 aa).

A run of 14 helical transmembrane segments spans residues 11 to 31 (AYPE…DLFA), 37 to 57 (YLAF…TCGI), 74 to 94 (AMSD…LIYS), 103 to 123 (LLKG…MVMV), 128 to 148 (LITL…MVAL), 162 to 182 (FFVL…MLYG), 205 to 225 (IFII…SAVP), 238 to 258 (PTAV…GFVM), 272 to 292 (WQGM…IAAI), 300 to 320 (MLAY…IAAG), 328 to 348 (MFYV…IMLV), 371 to 391 (LAFM…MIGF), 405 to 425 (GYIW…FYYL), and 457 to 477 (LAII…LSAI).

This sequence belongs to the complex I subunit 2 family. NDH-1 is composed of 14 different subunits. Subunits NuoA, H, J, K, L, M, N constitute the membrane sector of the complex.

It localises to the cell inner membrane. The catalysed reaction is a quinone + NADH + 5 H(+)(in) = a quinol + NAD(+) + 4 H(+)(out). In terms of biological role, NDH-1 shuttles electrons from NADH, via FMN and iron-sulfur (Fe-S) centers, to quinones in the respiratory chain. The immediate electron acceptor for the enzyme in this species is believed to be ubiquinone. Couples the redox reaction to proton translocation (for every two electrons transferred, four hydrogen ions are translocated across the cytoplasmic membrane), and thus conserves the redox energy in a proton gradient. The chain is NADH-quinone oxidoreductase subunit N from Nitrosomonas europaea (strain ATCC 19718 / CIP 103999 / KCTC 2705 / NBRC 14298).